Consider the following 551-residue polypeptide: MARSGLDRIDISPQPAKKIARVGGLQHPFVKTDINTINVEHHFIDTLQKTSPNMDCRGMTAGIFIRLSHMYKILTTLESPNDVTYTTPGSTNALFFKTSTQPQEPHPEELASKLTQDDIKRILLTIESETRGQGDNAIWTLLRRNLITASTLKWSVSGPVIPPQWFYHHNTTDTYGDAAAMAFGKTNEPAARAIVEALFIDPADIRTPDHLTPEATTKFFNFDMLNTKSPSLLVGTPRIGTYECGLLIDVRTGLIGASLDVLVCDRDPLTGTLNPHPAETDISFFEIKCRAKYLFDPDDKNNPLGRTYTTLINRPTMANLRDFLYTIKNPCVSFFGPSANPSTREALITDHVEWKRLGFKGGRALTELDAHHLGLNRTISSRVWVFNDPDIQKGTITTIAWATGDTALQIPVFANPRHANFKQIAVQTYVLSGYFPALKLRPFLVTFIGRVRRPHEVGVPLRVDTQAAAIYEYNWPTIPPHCAVPVIAVLTPIEVDVPRVTKILKDTGNNAITSALRSLRWDNLHPAVEEESVDCANGTTSLLRATEKPLL.

Belongs to the herpesviridae alkaline nuclease family. Interacts with major DNA-binding protein; this interaction increases the nuclease processivity of the alkaline exonuclease.

The protein localises to the host nucleus. It is found in the host cytoplasm. In terms of biological role, plays a role in processing non linear or branched viral DNA intermediates in order to promote the production of mature packaged unit-length linear progeny viral DNA molecules. Exhibits endonuclease and exonuclease activities and accepts both double-stranded and single-stranded DNA as substrate. Exonuclease digestion of DNA is in the 5'-&gt; 3' direction and the products are 5'-monophosphate nucleosides. Additionally, forms a recombinase with the major DNA-binding protein, which displays strand exchange activity. In Varicella-zoster virus (strain Oka vaccine) (HHV-3), this protein is Alkaline nuclease.